The primary structure comprises 21 residues: Cyanophlyctin (21 aa).

As to expression, expressed by the skin glands.

The protein localises to the secreted. Has antibacterial activity against E.coli HP101BA (MIC=6.4 uM), K.pneumoniae PTCC1388 (MIC=7.3 uM), M.luteus PTCC1625 (MIC=4.7 uM) and S.aureus PTCC1431 (MIC=5.3 uM). Has no or very limited (&lt;3%) hemolytic activity at concentrations of 15 ug/ml and 60 ug/ml, respectively. The sequence is that of Cyanophlyctin from Euphlyctis cyanophlyctis (Skittering frog).